Consider the following 175-residue polypeptide: ATP-dependent protease subunit HslV (175 aa).

Thr-5 is a catalytic residue. Na(+)-binding residues include Gly-160, Asp-163, and Thr-166.

Belongs to the peptidase T1B family. HslV subfamily. In terms of assembly, a double ring-shaped homohexamer of HslV is capped on each side by a ring-shaped HslU homohexamer. The assembly of the HslU/HslV complex is dependent on binding of ATP.

The protein localises to the cytoplasm. It carries out the reaction ATP-dependent cleavage of peptide bonds with broad specificity.. Its activity is regulated as follows. Allosterically activated by HslU binding. Functionally, protease subunit of a proteasome-like degradation complex believed to be a general protein degrading machinery. This is ATP-dependent protease subunit HslV from Myxococcus xanthus.